The sequence spans 319 residues: Homoserine kinase (319 aa).

Position 100 to 110 (Pro100 to Ser110) interacts with ATP.

This sequence belongs to the GHMP kinase family. Homoserine kinase subfamily.

The protein resides in the cytoplasm. It carries out the reaction L-homoserine + ATP = O-phospho-L-homoserine + ADP + H(+). It functions in the pathway amino-acid biosynthesis; L-threonine biosynthesis; L-threonine from L-aspartate: step 4/5. In terms of biological role, catalyzes the ATP-dependent phosphorylation of L-homoserine to L-homoserine phosphate. This Chloroherpeton thalassium (strain ATCC 35110 / GB-78) protein is Homoserine kinase.